The primary structure comprises 650 residues: Probable Xaa-Pro aminopeptidase P (650 aa).

Residues Asp447, Asp458, Glu556, and Glu570 each contribute to the Mn(2+) site.

The protein belongs to the peptidase M24B family. Requires Mn(2+) as cofactor.

The catalysed reaction is Release of any N-terminal amino acid, including proline, that is linked to proline, even from a dipeptide or tripeptide.. Catalyzes the removal of a penultimate prolyl residue from the N-termini of peptides. The protein is Probable Xaa-Pro aminopeptidase P (AMPP) of Phaeosphaeria nodorum (strain SN15 / ATCC MYA-4574 / FGSC 10173) (Glume blotch fungus).